The primary structure comprises 166 residues: Heme-degrading monooxygenase HmoB (166 aa).

Asparagine 33 serves as a coordination point for Fe cation. Positions phenylalanine 66–phenylalanine 153 constitute an ABM domain. Histidine 138 lines the heme pocket.

This sequence belongs to the antibiotic biosynthesis monooxygenase family. As to quaternary structure, homodimer.

Its subcellular location is the cytoplasm. The catalysed reaction is heme b + 3 reduced [NADPH--hemoprotein reductase] + 3 O2 = biliverdin IXalpha + CO + Fe(2+) + 3 oxidized [NADPH--hemoprotein reductase] + 3 H2O + H(+). Functionally, catalyzes the oxidative degradation of the heme macrocyclic porphyrin ring in the presence of a suitable electron donor such as ascorbate or NADPH--cytochrome P450 reductase, with subsequent release of free iron. This Bacillus subtilis (strain 168) protein is Heme-degrading monooxygenase HmoB (hmoB).